The sequence spans 633 residues: Threonine--tRNA ligase (633 aa).

The editing domain stretch occupies residues 1–143 (MRALFLHSNR…SRTIKPKKVK (143 aa)). Catalytic regions lie at residues 220–515 (NPLN…PVLP) and 221–515 (PLND…PVLP). Cys-314, His-365, and His-488 together coordinate Zn(2+).

It belongs to the class-II aminoacyl-tRNA synthetase family. As to quaternary structure, homodimer. It depends on Zn(2+) as a cofactor.

It localises to the cytoplasm. It carries out the reaction tRNA(Thr) + L-threonine + ATP = L-threonyl-tRNA(Thr) + AMP + diphosphate + H(+). Functionally, catalyzes the attachment of threonine to tRNA(Thr) in a two-step reaction: L-threonine is first activated by ATP to form Thr-AMP and then transferred to the acceptor end of tRNA(Thr). Also edits incorrectly charged L-seryl-tRNA(Thr). The protein is Threonine--tRNA ligase of Nanoarchaeum equitans (strain Kin4-M).